Here is a 309-residue protein sequence, read N- to C-terminus: Ornithine carbamoyltransferase (309 aa).

Carbamoyl phosphate-binding positions include 57–60, Gln-84, Arg-108, and 135–138; these read STRT and HPCQ. Residues Asn-166, Asp-226, and 230 to 231 each bind L-ornithine; that span reads SM. Residues 265-266 and Arg-293 each bind carbamoyl phosphate; that span reads CL.

The protein belongs to the aspartate/ornithine carbamoyltransferase superfamily. OTCase family.

The protein localises to the cytoplasm. It carries out the reaction carbamoyl phosphate + L-ornithine = L-citrulline + phosphate + H(+). The protein operates within amino-acid biosynthesis; L-arginine biosynthesis; L-arginine from L-ornithine and carbamoyl phosphate: step 1/3. Functionally, reversibly catalyzes the transfer of the carbamoyl group from carbamoyl phosphate (CP) to the N(epsilon) atom of ornithine (ORN) to produce L-citrulline. The polypeptide is Ornithine carbamoyltransferase (Rhizorhabdus wittichii (strain DSM 6014 / CCUG 31198 / JCM 15750 / NBRC 105917 / EY 4224 / RW1) (Sphingomonas wittichii)).